The sequence spans 305 residues: Acetylglutamate kinase (305 aa).

Residues 78 to 79 (GG), Arg-100, and Asn-202 contribute to the substrate site.

It belongs to the acetylglutamate kinase family. ArgB subfamily.

It localises to the cytoplasm. The enzyme catalyses N-acetyl-L-glutamate + ATP = N-acetyl-L-glutamyl 5-phosphate + ADP. Its pathway is amino-acid biosynthesis; L-arginine biosynthesis; N(2)-acetyl-L-ornithine from L-glutamate: step 2/4. Its function is as follows. Catalyzes the ATP-dependent phosphorylation of N-acetyl-L-glutamate. In Polaromonas sp. (strain JS666 / ATCC BAA-500), this protein is Acetylglutamate kinase.